Reading from the N-terminus, the 178-residue chain is uncharacterized protein (178 aa).

4 helical membrane-spanning segments follow: residues 29–49 (AATG…AYLF), 76–96 (VISI…YFLL), 105–125 (PGIL…NPIF), and 139–159 (IITT…SISF).

It is found in the cell membrane. This is an uncharacterized protein from Bacillus subtilis (strain 168).